We begin with the raw amino-acid sequence, 90 residues long: U7-theraphotoxin-Hhn1a 7 (90 aa).

Positions Met-1 to Ser-19 are cleaved as a signal peptide. A propeptide spanning residues Phe-20 to Glu-50 is cleaved from the precursor. Cystine bridges form between Cys-51–Cys-65, Cys-58–Cys-70, and Cys-64–Cys-81.

The protein belongs to the neurotoxin 10 (Hwtx-1) family. 13 (Hntx-13) subfamily. As to expression, expressed by the venom gland.

It localises to the secreted. Its function is as follows. Ion channel inhibitor. The protein is U7-theraphotoxin-Hhn1a 7 of Cyriopagopus hainanus (Chinese bird spider).